We begin with the raw amino-acid sequence, 283 residues long: Phospholipid phosphatase 1 (283 aa).

Topologically, residues 1 to 6 (MFDKTR) are cytoplasmic. Positions 5-7 (TRL) match the PDZ-binding; involved in localization to the apical cell membrane motif. Residues 7–27 (LPYVALDVICVLLAGLPFAIL) form a helical membrane-spanning segment. At 28-53 (TSRHTPFQRGIFCNDDSIKYPYKEDT) the chain is on the extracellular side. The chain crosses the membrane as a helical span at residues 54–74 (IPYALLGGIVIPFCIIVMSIG). Residues 75-88 (ESLSVYFNVLHSNS) are Cytoplasmic-facing. A helical membrane pass occupies residues 89-109 (FVGNPYIATIYKAVGAFLFGV). Residues 110–164 (SASQSLTDIAKYTIGSLRPHFLAICNPDWSKINCSDGYIEDYICQGNEEKVKEGR) lie on the Extracellular side of the membrane. The phosphatase sequence motif I stretch occupies residues 120-128 (KYTIGSLRP). N-linked (GlcNAc...) asparagine glycosylation occurs at Asn142. The chain crosses the membrane as a helical span at residues 165-185 (LSFYSGHSSFSMYCMLFVALY). Residues 168 to 171 (YSGH) are phosphatase sequence motif II. His171 functions as the Proton donors in the catalytic mechanism. Residues 186–199 (LQARMKGDWARLLR) are Cytoplasmic-facing. The helical transmembrane segment at 200–220 (PMLQFGLIAFSIYVGLSRVSD) threads the bilayer. The phosphatase sequence motif III stretch occupies residues 216–227 (SRVSDYKHHWSD). Residues 221–229 (YKHHWSDVT) are Extracellular-facing. The active-site Nucleophile is His223. A helical membrane pass occupies residues 230-250 (VGLIQGAAMAILVALYVSDFF). Over 251 to 283 (KDTHSYKERKEEDPHTTLHETASSRNYSTNHEP) the chain is Cytoplasmic. Residues 260-283 (KEEDPHTTLHETASSRNYSTNHEP) are disordered. A compositionally biased stretch (polar residues) spans 269–283 (HETASSRNYSTNHEP).

It belongs to the PA-phosphatase related phosphoesterase family. In terms of assembly, forms functional homodimers and homooligomers that are not required for substrate recognition and catalytic activity. Can also form heterooligomers with PLPP2 and PLPP3. N-glycosylated. N-linked sugars are of the complex type. N-glycosylation is not required for the phosphatase activity. As to expression, widely expressed. Highly expressed in kidney and lung. Almost undetectable in brain, heart, bone, muscle or spleen.

The protein resides in the cell membrane. It localises to the apical cell membrane. Its subcellular location is the membrane raft. It is found in the membrane. The protein localises to the caveola. The catalysed reaction is a 1,2-diacyl-sn-glycero-3-phosphate + H2O = a 1,2-diacyl-sn-glycerol + phosphate. The enzyme catalyses 1,2-dihexadecanoyl-sn-glycero-3-phosphate + H2O = 1,2-dihexadecanoyl-sn-glycerol + phosphate. It carries out the reaction 1,2-di-(9Z-octadecenoyl)-sn-glycero-3-phosphate + H2O = 1,2-di-(9Z-octadecenoyl)-sn-glycerol + phosphate. It catalyses the reaction a monoacyl-sn-glycero-3-phosphate + H2O = a monoacylglycerol + phosphate. The catalysed reaction is (9Z)-octadecenoyl-sn-glycero-3-phosphate + H2O = (9Z-octadecenoyl)-glycerol + phosphate. The enzyme catalyses a 1-acyl-sn-glycero-3-phosphate + H2O = a 1-acyl-sn-glycerol + phosphate. It carries out the reaction 1-(9Z-octadecenoyl)-sn-glycero-3-phosphate + H2O = 1-(9Z-octadecenoyl)-sn-glycerol + phosphate. It catalyses the reaction a 1,2-diacyl-sn-glycerol 3-diphosphate + H2O = a 1,2-diacyl-sn-glycero-3-phosphate + phosphate + H(+). The catalysed reaction is sphing-4-enine 1-phosphate + H2O = sphing-4-enine + phosphate. The enzyme catalyses an N-acylsphing-4-enine 1-phosphate + H2O = an N-acylsphing-4-enine + phosphate. It carries out the reaction N-(octanoyl)-sphing-4-enine-1-phosphate + H2O = N-octanoylsphing-4-enine + phosphate. It catalyses the reaction N-(9Z-octadecenoyl)-ethanolamine phosphate + H2O = N-(9Z-octadecenoyl) ethanolamine + phosphate. The catalysed reaction is 1-hexadecanoyl-2-(9Z-octadecenoyl)-sn-glycero-3-phosphate + H2O = 1-hexadecanoyl-2-(9Z-octadecenoyl)-sn-glycerol + phosphate. The protein operates within lipid metabolism; phospholipid metabolism. With respect to regulation, magnesium-independent phospholipid phosphatase. Insensitive to N-ethylmaleimide. Its function is as follows. Magnesium-independent phospholipid phosphatase of the plasma membrane that catalyzes the dephosphorylation of a variety of glycerolipid and sphingolipid phosphate esters including phosphatidate/PA, lysophosphatidate/LPA, diacylglycerol pyrophosphate/DGPP, sphingosine 1-phosphate/S1P and ceramide 1-phosphate/C1P. Also acts on N-oleoyl ethanolamine phosphate/N-(9Z-octadecenoyl)-ethanolamine phosphate, a potential physiological compound. Through its extracellular phosphatase activity allows both the hydrolysis and the cellular uptake of these bioactive lipid mediators from the milieu, regulating signal transduction in different cellular processes. It is for instance essential for the extracellular hydrolysis of S1P and subsequent conversion into intracellular S1P. Involved in the regulation of inflammation, platelets activation, cell proliferation and migration among other processes. May also have an intracellular activity to regulate phospholipid-mediated signaling pathways. This Mus musculus (Mouse) protein is Phospholipid phosphatase 1.